We begin with the raw amino-acid sequence, 272 residues long: Protein SSO0103 (272 aa).

The protein belongs to the CinA family.

The sequence is that of Protein SSO0103 from Saccharolobus solfataricus (strain ATCC 35092 / DSM 1617 / JCM 11322 / P2) (Sulfolobus solfataricus).